The chain runs to 393 residues: NAD(P)H-quinone oxidoreductase subunit H, chloroplastic (393 aa).

Belongs to the complex I 49 kDa subunit family. NDH is composed of at least 16 different subunits, 5 of which are encoded in the nucleus.

The protein resides in the plastid. Its subcellular location is the chloroplast thylakoid membrane. It carries out the reaction a plastoquinone + NADH + (n+1) H(+)(in) = a plastoquinol + NAD(+) + n H(+)(out). The enzyme catalyses a plastoquinone + NADPH + (n+1) H(+)(in) = a plastoquinol + NADP(+) + n H(+)(out). Its function is as follows. NDH shuttles electrons from NAD(P)H:plastoquinone, via FMN and iron-sulfur (Fe-S) centers, to quinones in the photosynthetic chain and possibly in a chloroplast respiratory chain. The immediate electron acceptor for the enzyme in this species is believed to be plastoquinone. Couples the redox reaction to proton translocation, and thus conserves the redox energy in a proton gradient. The polypeptide is NAD(P)H-quinone oxidoreductase subunit H, chloroplastic (Ipomoea purpurea (Common morning glory)).